A 607-amino-acid chain; its full sequence is Elongation factor 4 (607 aa).

The 183-residue stretch at 11–193 (EKIRNFSIIA…QIVEKVPAPT (183 aa)) folds into the tr-type G domain. Residues 23–28 (DHGKST) and 140–143 (NKID) each bind GTP.

Belongs to the TRAFAC class translation factor GTPase superfamily. Classic translation factor GTPase family. LepA subfamily.

The protein localises to the cell membrane. It catalyses the reaction GTP + H2O = GDP + phosphate + H(+). Required for accurate and efficient protein synthesis under certain stress conditions. May act as a fidelity factor of the translation reaction, by catalyzing a one-codon backward translocation of tRNAs on improperly translocated ribosomes. Back-translocation proceeds from a post-translocation (POST) complex to a pre-translocation (PRE) complex, thus giving elongation factor G a second chance to translocate the tRNAs correctly. Binds to ribosomes in a GTP-dependent manner. The polypeptide is Elongation factor 4 (Streptococcus gordonii (strain Challis / ATCC 35105 / BCRC 15272 / CH1 / DL1 / V288)).